Here is a 262-residue protein sequence, read N- to C-terminus: GTP cyclohydrolase 1 type 2 homolog (262 aa).

The a divalent metal cation site is built by His-64, His-65, Asp-103, His-224, and Glu-228.

Belongs to the GTP cyclohydrolase I type 2/NIF3 family. Homohexamer.

This Clostridium perfringens (strain 13 / Type A) protein is GTP cyclohydrolase 1 type 2 homolog.